We begin with the raw amino-acid sequence, 312 residues long: tRNA pseudouridine synthase B (312 aa).

Asp37 acts as the Nucleophile in catalysis.

The protein belongs to the pseudouridine synthase TruB family. Type 1 subfamily.

The enzyme catalyses uridine(55) in tRNA = pseudouridine(55) in tRNA. Functionally, responsible for synthesis of pseudouridine from uracil-55 in the psi GC loop of transfer RNAs. The sequence is that of tRNA pseudouridine synthase B from Thermus thermophilus (strain ATCC BAA-163 / DSM 7039 / HB27).